The chain runs to 471 residues: Tigger transposable element-derived protein 3 (471 aa).

An HTH psq-type domain is found at 3–55 (LSSKKKLHALSLAEKIQVLELLDESKMSQSEVARRFQVSQPQISRICKNKEKL). 2 consecutive DNA-binding regions (H-T-H motif) follow at residues 31–51 (QSEV…ICKN) and 100–130 (PMLL…WKRR). The 71-residue stretch at 67–137 (ERKRKRESKY…KRRNNVGFGA (71 aa)) folds into the HTH CENPB-type domain. The region spanning 167 to 360 (FSPEDVFGCA…VPPQLIFSSF (194 aa)) is the DDE-1 domain.

It belongs to the tigger transposable element derived protein family.

The protein resides in the nucleus. This Homo sapiens (Human) protein is Tigger transposable element-derived protein 3 (TIGD3).